The sequence spans 325 residues: uncharacterized protein (325 aa).

The interval 1–32 (MKQEYIPLDEFPNKSNEGMLNDEGTSSSGLST) is disordered. The segment covering 23-32 (EGTSSSGLST) has biased composition (low complexity). Residues 135–223 (AEEISNLKTS…LKKREDLLRL (89 aa)) adopt a coiled-coil conformation.

The protein localises to the cytoplasm. It is found in the cytoskeleton. The protein resides in the microtubule organizing center. Its subcellular location is the spindle pole body. This is an uncharacterized protein from Schizosaccharomyces pombe (strain 972 / ATCC 24843) (Fission yeast).